Reading from the N-terminus, the 138-residue chain is Acidic phospholipase A2 Cvv-E6b (138 aa).

The first 16 residues, 1 to 16, serve as a signal peptide directing secretion; sequence MRTLWILAVLLLGVEG. Disulfide bonds link Cys-42–Cys-131, Cys-44–Cys-60, Cys-59–Cys-111, Cys-65–Cys-138, Cys-66–Cys-104, Cys-73–Cys-97, and Cys-91–Cys-102. Positions 43, 45, and 47 each coordinate Ca(2+). His-63 is an active-site residue. Asp-64 provides a ligand contact to Ca(2+). Residue Asp-105 is part of the active site.

It depends on Ca(2+) as a cofactor. Expressed by the venom gland.

It is found in the secreted. The catalysed reaction is a 1,2-diacyl-sn-glycero-3-phosphocholine + H2O = a 1-acyl-sn-glycero-3-phosphocholine + a fatty acid + H(+). Snake venom phospholipase A2 (PLA2) that shows very low inhibition of ADP-induced platelet aggregation in platelet-rich plasma of human, rabbit and guinea pig. PLA2 catalyzes the calcium-dependent hydrolysis of the 2-acyl groups in 3-sn-phosphoglycerides. This is Acidic phospholipase A2 Cvv-E6b from Crotalus viridis viridis (Prairie rattlesnake).